A 324-amino-acid polypeptide reads, in one-letter code: MLALGIEGTAHTLGIGIVSEDKVLANVFDTLTTEKGGIHPKEAAEHHARLMKPLLRKALSEAGVSLDDIDVIAFSQGPGLGPALRVVATAARALAVKYRKPIVGVNHCIAHVEITKMFGVKDPVGLYVSGGNTQVLALEGGRYRVFGETLDIGIGNAIDVFARELGLGFPGGPKVEKLAEKGEKYIELPYAVKGMDLSFSGLLTEAIRKYRSGKYRVEDLAYSFQETAFAALVEVTERAVAHTEKDEVVLVGGVAANNRLREMLRIMTEDRGIKFFVPPYDLCRDNGAMIAYTGLRMYKAGISFRLEETIVKQKFRTDEVEIVW.

H107, H111, and Y127 together coordinate Fe cation. Substrate contacts are provided by residues 127–131 (YVSGG), D159, G172, E176, and N257. D285 contacts Fe cation.

It belongs to the KAE1 / TsaD family. Monomer. Component of the KEOPS complex that consists of Kae1, Bud32, Cgi121 and Pcc1; the whole complex dimerizes. The cofactor is Fe(2+).

The protein localises to the cytoplasm. The catalysed reaction is L-threonylcarbamoyladenylate + adenosine(37) in tRNA = N(6)-L-threonylcarbamoyladenosine(37) in tRNA + AMP + H(+). Required for the formation of a threonylcarbamoyl group on adenosine at position 37 (t(6)A37) in tRNAs that read codons beginning with adenine. Is a component of the KEOPS complex that is probably involved in the transfer of the threonylcarbamoyl moiety of threonylcarbamoyl-AMP (TC-AMP) to the N6 group of A37. Kae1 likely plays a direct catalytic role in this reaction, but requires other protein(s) of the complex to fulfill this activity. In vitro, binds tRNA, ssRNA, both single- and double-stranded DNA, and exhibits a low ATPase activity. This Pyrococcus abyssi (strain GE5 / Orsay) protein is tRNA N6-adenosine threonylcarbamoyltransferase.